Here is a 209-residue protein sequence, read N- to C-terminus: Chaperone protein TorD (209 aa).

The protein belongs to the TorD/DmsD family. TorD subfamily.

The protein resides in the cytoplasm. Functionally, involved in the biogenesis of TorA. Acts on TorA before the insertion of the molybdenum cofactor and, as a result, probably favors a conformation of the apoenzyme that is competent for acquiring the cofactor. In Shewanella sp. (strain MR-4), this protein is Chaperone protein TorD.